Here is a 235-residue protein sequence, read N- to C-terminus: Orotidine 5'-phosphate decarboxylase (235 aa).

Residues aspartate 17, lysine 39, 66 to 75 (DLKLHDIGNT), threonine 121, arginine 182, glutamine 191, glycine 211, and arginine 212 each bind substrate. Lysine 68 serves as the catalytic Proton donor.

It belongs to the OMP decarboxylase family. Type 1 subfamily. Homodimer.

The catalysed reaction is orotidine 5'-phosphate + H(+) = UMP + CO2. It functions in the pathway pyrimidine metabolism; UMP biosynthesis via de novo pathway; UMP from orotate: step 2/2. Functionally, catalyzes the decarboxylation of orotidine 5'-monophosphate (OMP) to uridine 5'-monophosphate (UMP). The chain is Orotidine 5'-phosphate decarboxylase from Rhodopseudomonas palustris (strain HaA2).